Consider the following 564-residue polypeptide: Dihydroxy-acid dehydratase (564 aa).

The span at 1-10 (MTDTRTKRRM) shows a compositional bias: basic residues. Residues 1-23 (MTDTRTKRRMNWNSHHITQGDER) form a disordered region. Cys-57 provides a ligand contact to [2Fe-2S] cluster. Asp-89 contributes to the Mg(2+) binding site. Cys-130 contributes to the [2Fe-2S] cluster binding site. Positions 131 and 132 each coordinate Mg(2+). Lys-132 carries the N6-carboxylysine modification. Cys-202 provides a ligand contact to [2Fe-2S] cluster. Glu-454 lines the Mg(2+) pocket. The active-site Proton acceptor is Ser-480.

It belongs to the IlvD/Edd family. Homodimer. Requires [2Fe-2S] cluster as cofactor. Mg(2+) serves as cofactor.

The catalysed reaction is (2R)-2,3-dihydroxy-3-methylbutanoate = 3-methyl-2-oxobutanoate + H2O. It carries out the reaction (2R,3R)-2,3-dihydroxy-3-methylpentanoate = (S)-3-methyl-2-oxopentanoate + H2O. It functions in the pathway amino-acid biosynthesis; L-isoleucine biosynthesis; L-isoleucine from 2-oxobutanoate: step 3/4. Its pathway is amino-acid biosynthesis; L-valine biosynthesis; L-valine from pyruvate: step 3/4. Functionally, functions in the biosynthesis of branched-chain amino acids. Catalyzes the dehydration of (2R,3R)-2,3-dihydroxy-3-methylpentanoate (2,3-dihydroxy-3-methylvalerate) into 2-oxo-3-methylpentanoate (2-oxo-3-methylvalerate) and of (2R)-2,3-dihydroxy-3-methylbutanoate (2,3-dihydroxyisovalerate) into 2-oxo-3-methylbutanoate (2-oxoisovalerate), the penultimate precursor to L-isoleucine and L-valine, respectively. The protein is Dihydroxy-acid dehydratase of Deinococcus geothermalis (strain DSM 11300 / CIP 105573 / AG-3a).